A 270-amino-acid chain; its full sequence is 3-phenylpropionate-dihydrodiol/cinnamic acid-dihydrodiol dehydrogenase (270 aa).

10–34 contributes to the NAD(+) binding site; that stretch reads FITGGGSGLGLALVERFIEEGAQVA. Position 143 (S143) interacts with substrate. Catalysis depends on Y156, which acts as the Proton acceptor.

This sequence belongs to the short-chain dehydrogenases/reductases (SDR) family.

The catalysed reaction is 3-(cis-5,6-dihydroxycyclohexa-1,3-dien-1-yl)propanoate + NAD(+) = 3-(2,3-dihydroxyphenyl)propanoate + NADH + H(+). The enzyme catalyses (2E)-3-(cis-5,6-dihydroxycyclohexa-1,3-dien-1-yl)prop-2-enoate + NAD(+) = (2E)-3-(2,3-dihydroxyphenyl)prop-2-enoate + NADH + H(+). Its pathway is aromatic compound metabolism; 3-phenylpropanoate degradation. In terms of biological role, converts 3-phenylpropionate-dihydrodiol (PP-dihydrodiol) and cinnamic acid-dihydrodiol (CI-dihydrodiol) into 3-(2,3-dihydroxylphenyl)propanoic acid (DHPP) and 2,3-dihydroxicinnamic acid (DHCI), respectively. This Shigella flexneri serotype 5b (strain 8401) protein is 3-phenylpropionate-dihydrodiol/cinnamic acid-dihydrodiol dehydrogenase.